The chain runs to 221 residues: MMNLKQLAGEYAAGFVRDGMTIGLGTGSTVYWTIQKLGHRVQEGLSIQAVPTSKETEVLAKQLSIPLISLNEIDILDLTIDGADEINNDLQLIKGGGGALLREKIVATSSKELIIIADESKLVSHLGTFPLPIEIISFSWKQTEKRIQSLGCETHLRMKDSRPFITDNGNLIIDCIFPNKILNPNDTHTELKMITGVVETGLFINMKSKAIIGTKNGIKEY.

Substrate contacts are provided by residues 26–29 (TGST), 81–84 (DGAD), and 94–97 (KGGG). Glu103 serves as the catalytic Proton acceptor. A substrate-binding site is contributed by Lys121.

It belongs to the ribose 5-phosphate isomerase family. As to quaternary structure, homodimer.

It carries out the reaction aldehydo-D-ribose 5-phosphate = D-ribulose 5-phosphate. It functions in the pathway carbohydrate degradation; pentose phosphate pathway; D-ribose 5-phosphate from D-ribulose 5-phosphate (non-oxidative stage): step 1/1. Its function is as follows. Catalyzes the reversible conversion of ribose-5-phosphate to ribulose 5-phosphate. In Bacillus mycoides (strain KBAB4) (Bacillus weihenstephanensis), this protein is Ribose-5-phosphate isomerase A.